Reading from the N-terminus, the 329-residue chain is GTP 3',8-cyclase (329 aa).

The Radical SAM core domain occupies 1 to 229 (MNQIDYLRIS…EGQVRGNGPA (229 aa)). Arginine 8 is a binding site for GTP. Cysteine 15 and cysteine 19 together coordinate [4Fe-4S] cluster. Residue tyrosine 21 participates in S-adenosyl-L-methionine binding. A [4Fe-4S] cluster-binding site is contributed by cysteine 22. Arginine 60 lines the GTP pocket. Glycine 64 provides a ligand contact to S-adenosyl-L-methionine. Threonine 91 is a binding site for GTP. Serine 115 is an S-adenosyl-L-methionine binding site. Lysine 155 serves as a coordination point for GTP. Methionine 189 contributes to the S-adenosyl-L-methionine binding site. The [4Fe-4S] cluster site is built by cysteine 252 and cysteine 255. GTP is bound at residue 257–259 (RLR). Cysteine 269 serves as a coordination point for [4Fe-4S] cluster.

The protein belongs to the radical SAM superfamily. MoaA family. In terms of assembly, monomer and homodimer. [4Fe-4S] cluster serves as cofactor.

It catalyses the reaction GTP + AH2 + S-adenosyl-L-methionine = (8S)-3',8-cyclo-7,8-dihydroguanosine 5'-triphosphate + 5'-deoxyadenosine + L-methionine + A + H(+). It participates in cofactor biosynthesis; molybdopterin biosynthesis. In terms of biological role, catalyzes the cyclization of GTP to (8S)-3',8-cyclo-7,8-dihydroguanosine 5'-triphosphate. This chain is GTP 3',8-cyclase, found in Microcystis aeruginosa (strain NIES-843 / IAM M-2473).